The sequence spans 20 residues: ATP synthase subunit beta, chloroplastic (20 aa).

A compositionally biased stretch (polar residues) spans 1 to 10; the sequence is METTNESLGY. The segment at 1 to 20 is disordered; sequence METTNESLGYTDQIIGPVLD.

It belongs to the ATPase alpha/beta chains family. In terms of assembly, F-type ATPases have 2 components, CF(1) - the catalytic core - and CF(0) - the membrane proton channel. CF(1) has five subunits: alpha(3), beta(3), gamma(1), delta(1), epsilon(1). CF(0) has four main subunits: a(1), b(1), b'(1) and c(9-12).

The protein localises to the plastid. The protein resides in the chloroplast thylakoid membrane. The catalysed reaction is ATP + H2O + 4 H(+)(in) = ADP + phosphate + 5 H(+)(out). In terms of biological role, produces ATP from ADP in the presence of a proton gradient across the membrane. The catalytic sites are hosted primarily by the beta subunits. The chain is ATP synthase subunit beta, chloroplastic from Chattonella marina var. antiqua (Red tide flagellate).